The primary structure comprises 117 residues: Non-specific lipid-transfer protein 2 (117 aa).

The signal sequence occupies residues 1 to 25 (MAGLMKLACLVLACMIVAGPITSNA). 4 disulfide bridges follow: Cys29/Cys76, Cys39/Cys53, Cys54/Cys99, and Cys74/Cys113.

The protein belongs to the plant LTP family.

Its function is as follows. Plant non-specific lipid-transfer proteins transfer phospholipids as well as galactolipids across membranes. May play a role in wax or cutin deposition in the cell walls of expanding epidermal cells and certain secretory tissues. This Brassica napus (Rape) protein is Non-specific lipid-transfer protein 2 (LTP2).